Here is an 89-residue protein sequence, read N- to C-terminus: Small ribosomal subunit protein uS19 (89 aa).

This sequence belongs to the universal ribosomal protein uS19 family.

Functionally, protein S19 forms a complex with S13 that binds strongly to the 16S ribosomal RNA. The sequence is that of Small ribosomal subunit protein uS19 from Akkermansia muciniphila (strain ATCC BAA-835 / DSM 22959 / JCM 33894 / BCRC 81048 / CCUG 64013 / CIP 107961 / Muc).